A 481-amino-acid chain; its full sequence is 3-isopropylmalate dehydratase large subunit (481 aa).

[4Fe-4S] cluster-binding residues include Cys-363, Cys-423, and Cys-426. A disordered region spans residues 432–459 (DQLKPGERSASTSNRNFEGRQGPGGRTH).

It belongs to the aconitase/IPM isomerase family. LeuC type 1 subfamily. In terms of assembly, heterodimer of LeuC and LeuD. The cofactor is [4Fe-4S] cluster.

The enzyme catalyses (2R,3S)-3-isopropylmalate = (2S)-2-isopropylmalate. It participates in amino-acid biosynthesis; L-leucine biosynthesis; L-leucine from 3-methyl-2-oxobutanoate: step 2/4. In terms of biological role, catalyzes the isomerization between 2-isopropylmalate and 3-isopropylmalate, via the formation of 2-isopropylmaleate. In Corynebacterium glutamicum (strain ATCC 13032 / DSM 20300 / JCM 1318 / BCRC 11384 / CCUG 27702 / LMG 3730 / NBRC 12168 / NCIMB 10025 / NRRL B-2784 / 534), this protein is 3-isopropylmalate dehydratase large subunit.